The primary structure comprises 217 residues: Flagellin B1 (217 aa).

The propeptide occupies 1–12; that stretch reads MKVFEFLKGKRG.

This sequence belongs to the archaeal flagellin family.

Its subcellular location is the archaeal flagellum. Its function is as follows. Flagellin is the subunit protein which polymerizes to form the filaments of archaeal flagella. This Methanocaldococcus jannaschii (strain ATCC 43067 / DSM 2661 / JAL-1 / JCM 10045 / NBRC 100440) (Methanococcus jannaschii) protein is Flagellin B1 (flaB1).